Reading from the N-terminus, the 475-residue chain is Glycogen synthase (475 aa).

Residue Lys-15 coordinates ADP-alpha-D-glucose.

The protein belongs to the glycosyltransferase 1 family. Bacterial/plant glycogen synthase subfamily.

The catalysed reaction is [(1-&gt;4)-alpha-D-glucosyl](n) + ADP-alpha-D-glucose = [(1-&gt;4)-alpha-D-glucosyl](n+1) + ADP + H(+). The protein operates within glycan biosynthesis; glycogen biosynthesis. In terms of biological role, synthesizes alpha-1,4-glucan chains using ADP-glucose. The chain is Glycogen synthase from Kosmotoga olearia (strain ATCC BAA-1733 / DSM 21960 / TBF 19.5.1).